The primary structure comprises 204 residues: Ribosomal RNA small subunit methyltransferase G (204 aa).

The S-adenosyl-L-methionine site is built by Gly-73, Phe-78, and Arg-139.

The protein belongs to the methyltransferase superfamily. RNA methyltransferase RsmG family.

The protein resides in the cytoplasm. The enzyme catalyses guanosine(527) in 16S rRNA + S-adenosyl-L-methionine = N(7)-methylguanosine(527) in 16S rRNA + S-adenosyl-L-homocysteine. In terms of biological role, specifically methylates the N7 position of guanine in position 527 of 16S rRNA. The chain is Ribosomal RNA small subunit methyltransferase G from Coxiella burnetii (strain Dugway 5J108-111).